Here is a 403-residue protein sequence, read N- to C-terminus: Ribosomal RNA large subunit methyltransferase I (403 aa).

The PUA domain maps to 9-88 (YPRLILSKGR…ESIDIAFFTR (80 aa)).

It belongs to the methyltransferase superfamily. RlmI family.

Its subcellular location is the cytoplasm. It carries out the reaction cytidine(1962) in 23S rRNA + S-adenosyl-L-methionine = 5-methylcytidine(1962) in 23S rRNA + S-adenosyl-L-homocysteine + H(+). Functionally, specifically methylates the cytosine at position 1962 (m5C1962) of 23S rRNA. This is Ribosomal RNA large subunit methyltransferase I from Salmonella paratyphi C (strain RKS4594).